Reading from the N-terminus, the 296-residue chain is 4-hydroxybenzoate octaprenyltransferase (296 aa).

Helical transmembrane passes span 28–48 (PIGI…AGKG), 52–72 (LINI…GCVI), 102–122 (ALVF…LTNA), 146–166 (YYPQ…AFTA), 169–189 (GDLP…TVGY), 219–239 (VIIL…GARF), 241–261 (LGGW…WEFW), and 275–295 (FLHN…DYAF).

It belongs to the UbiA prenyltransferase family. Requires Mg(2+) as cofactor.

It localises to the cell inner membrane. The enzyme catalyses all-trans-octaprenyl diphosphate + 4-hydroxybenzoate = 4-hydroxy-3-(all-trans-octaprenyl)benzoate + diphosphate. The protein operates within cofactor biosynthesis; ubiquinone biosynthesis. Its function is as follows. Catalyzes the prenylation of para-hydroxybenzoate (PHB) with an all-trans polyprenyl group. Mediates the second step in the final reaction sequence of ubiquinone-8 (UQ-8) biosynthesis, which is the condensation of the polyisoprenoid side chain with PHB, generating the first membrane-bound Q intermediate 3-octaprenyl-4-hydroxybenzoate. The chain is 4-hydroxybenzoate octaprenyltransferase from Pseudomonas fluorescens (strain SBW25).